Consider the following 75-residue polypeptide: DNA-directed RNA polymerase subunit omega (75 aa).

This sequence belongs to the RNA polymerase subunit omega family. In cyanobacteria the RNAP catalytic core is composed of 2 alpha, 1 beta, 1 beta', 1 gamma and 1 omega subunit. When a sigma factor is associated with the core the holoenzyme is formed, which can initiate transcription.

The enzyme catalyses RNA(n) + a ribonucleoside 5'-triphosphate = RNA(n+1) + diphosphate. In terms of biological role, promotes RNA polymerase assembly. Latches the N- and C-terminal regions of the beta' subunit thereby facilitating its interaction with the beta and alpha subunits. This chain is DNA-directed RNA polymerase subunit omega, found in Gloeothece citriformis (strain PCC 7424) (Cyanothece sp. (strain PCC 7424)).